The sequence spans 701 residues: MGLPEERVRSGSGSRGQEEAGAGGRARSWSPPPEVSRSAHVPSLQRYRELHRRSVEEPREFWGDIAKEFYWKTPCPGPFLRYNFDVTKGKIFIEWMKGATTNICYNVLDRNVHEKKLGDKVAFYWEGNEPGETTQITYHQLLVQVCQFSNVLRKQGIQKGDRVAIYMPMIPELVVAMLACARIGALHSIVFAGFSSESLCERILDSSCSLLITTDAFYRGEKLVNLKELADEALQKCQEKGFPVRCCIVVKHLGRAELGMGDSTSQSPPIKRSCPDVQISWNQGIDLWWHELMQEAGDECEPEWCDAEDPLFILYTSGSTGKPKGVVHTVGGYMLYVATTFKYVFDFHAEDVFWCTADIGWITGHSYVTYGPLANGATSVLFEGIPTYPDVNRLWSIVDKYKVTKFYTAPTAIRLLMKFGDEPVTKHSRASLQVLGTVGEPINPEAWLWYHRVVGAQRCPIVDTFWQTETGGHMLTPLPGATPMKPGSATFPFFGVAPAILNESGEELEGEAEGYLVFKQPWPGIMRTVYGNHERFETTYFKKFPGYYVTGDGCQRDQDGYYWITGRIDDMLNVSGHLLSTAEVESALVEHEAVAEAAVVGHPHPVKGECLYCFVTLCDGHTFSPKLTEELKKQIREKIGPIATPDYIQNAPGLPKTRSGKIMRRVLRKIAQNDHDLGDMSTVADPSVISHLFSHRCLTIQ.

Positions 1–41 (MGLPEERVRSGSGSRGQEEAGAGGRARSWSPPPEVSRSAHV) are disordered. The interval 1–107 (MGLPEERVRS…GATTNICYNV (107 aa)) is interaction with TFEB. 3 positions are modified to phosphoserine: serine 28, serine 30, and serine 36. 219–222 (RGEK) lines the CoA pocket. Serine 263, serine 265, and serine 267 each carry phosphoserine. Threonine 363 contacts CoA. Lysine 418 bears the N6-acetyllysine mark. ATP-binding positions include 439-441 (GEP), 463-468 (DTFWQT), aspartate 552, and arginine 567. CoA-binding residues include serine 575 and arginine 636. The short motif at 656–668 (KTRSGKIMRRVLR) is the Nuclear localization signal element. Serine 659 bears the Phosphoserine; by AMPK mark. An N6-acetyllysine modification is found at lysine 661.

Belongs to the ATP-dependent AMP-binding enzyme family. In terms of assembly, monomer. Interacts with TFEB. AMPK-mediated phosphorylated form at Ser-659 interacts with KPNA1; this interaction results in nuclear translocation of ACSS2. Interacts with the 'Thr-172' phosphorylated form of PRKAA2. Interacts with CREBBP. Post-translationally, reversibly acetylated at Lys-661. The acetyl-CoA synthase activity is inhibited by acetylation and activated by deacetylation mediated by the deacetylases SIRT1 and SIRT3. In terms of processing, glucose deprivation results in its AMPK-dependent phosphorylation at Ser-659, which leads to exposure of its nuclear localization signal, required for its interaction with KPNA1 and subsequent translocation to the nucleus.

Its subcellular location is the cytoplasm. The protein resides in the cytosol. It is found in the nucleus. The enzyme catalyses acetate + ATP + CoA = acetyl-CoA + AMP + diphosphate. It catalyses the reaction propanoate + ATP + CoA = propanoyl-CoA + AMP + diphosphate. Its activity is regulated as follows. Inhibited by acetylation at Lys-661 and activated by deacetylation mediated by the deacetylases SIRT1 and SIRT3. Catalyzes the synthesis of acetyl-CoA from short-chain fatty acids. Acetate is the preferred substrate. Can also utilize propionate with a much lower affinity. Nuclear ACSS2 promotes glucose deprivation-induced lysosomal biogenesis and autophagy, tumor cell survival and brain tumorigenesis. Glucose deprivation results in AMPK-mediated phosphorylation of ACSS2 leading to its translocation to the nucleus where it binds to TFEB and locally produces acetyl-CoA for histone acetylation in the promoter regions of TFEB target genes thereby activating their transcription. The regulation of genes associated with autophagy and lysosomal activity through ACSS2 is important for brain tumorigenesis and tumor survival. Acts as a chromatin-bound transcriptional coactivator that up-regulates histone acetylation and expression of neuronal genes. Can be recruited to the loci of memory-related neuronal genes to maintain a local acetyl-CoA pool, providing the substrate for histone acetylation and promoting the expression of specific genes, which is essential for maintaining long-term spatial memory. The sequence is that of Acetyl-coenzyme A synthetase, cytoplasmic (ACSS2) from Homo sapiens (Human).